An 898-amino-acid chain; its full sequence is DNA mismatch repair protein MutS (898 aa).

Residue 646–653 (GPNMGGKS) coordinates ATP.

It belongs to the DNA mismatch repair MutS family.

Its function is as follows. This protein is involved in the repair of mismatches in DNA. It is possible that it carries out the mismatch recognition step. This protein has a weak ATPase activity. This Brucella ovis (strain ATCC 25840 / 63/290 / NCTC 10512) protein is DNA mismatch repair protein MutS.